The sequence spans 176 residues: Peroxiredoxin AHP1 (176 aa).

Residue S2 is modified to N-acetylserine. The Thioredoxin domain occupies 9-176; sequence FPAGDYKFQY…SSVESVLAHL (168 aa). Phosphoserine is present on S28. A Glycyl lysine isopeptide (Lys-Gly) (interchain with G-Cter in URM1) cross-link involves residue K32. A Glycyl lysine isopeptide (Lys-Gly) (interchain with G-Cter in ubiquitin); alternate cross-link involves residue K48. K48 participates in a covalent cross-link: Glycyl lysine isopeptide (Lys-Gly) (interchain with G-Cter in URM1); alternate. S59 is modified (phosphoserine). The Cysteine sulfenic acid (-SOH) intermediate role is filled by C62. C62 bears the Cysteine persulfide mark. Residue K79 forms a Glycyl lysine isopeptide (Lys-Gly) (interchain with G-Cter in URM1) linkage. K81 participates in a covalent cross-link: Glycyl lysine isopeptide (Lys-Gly) (interchain with G-Cter in ubiquitin); alternate. A Glycyl lysine isopeptide (Lys-Gly) (interchain with G-Cter in URM1); alternate cross-link involves residue K81. K107 is covalently cross-linked (Glycyl lysine isopeptide (Lys-Gly) (interchain with G-Cter in URM1)). K113 is covalently cross-linked (Glycyl lysine isopeptide (Lys-Gly) (interchain with G-Cter in ubiquitin)). Residue S116 is modified to Phosphoserine. At C120 the chain carries Cysteine persulfide. K124 is covalently cross-linked (Glycyl lysine isopeptide (Lys-Gly) (interchain with G-Cter in URM1)). K156 is covalently cross-linked (Glycyl lysine isopeptide (Lys-Gly) (interchain with G-Cter in URM1); alternate). K156 is covalently cross-linked (Glycyl lysine isopeptide (Lys-Gly) (interchain with G-Cter in SUMO); alternate).

This sequence belongs to the peroxiredoxin family. Prx5 subfamily. Homodimer; disulfide-linked, upon oxidation. Post-translationally, conjugated to URM1, a ubiquitin-like protein, in response to oxidative stresses. The attachment of URM1 to lysine residues exclusively depends on the presence of a peroxidatic cysteine in the target protein, with low specificity for the particular residue, motif, or structural context at which urmylation can occur. The URM1-conjugation reaction is mechanistically and directly coupled to the process of cysteine persulfidation, transfering the sulfur atom of the URM1 thiocarboxyl group to redox-active cysteine residues in the target protein if it is exposed to oxidative conditions. In terms of processing, persulfidated on specific redox-active cysteine residues. Persulfidation (also called protein S-sulfhydration) may provide a molecular mechanism that enables cells to protect vulnerable cysteine residues from reactive oxygen species (ROS) under stress conditions.

Its subcellular location is the cytoplasm. It carries out the reaction a hydroperoxide + [thioredoxin]-dithiol = an alcohol + [thioredoxin]-disulfide + H2O. In terms of biological role, thiol-specific peroxidase that catalyzes the reduction of hydrogen peroxide and organic hydroperoxides to water and alcohols, respectively. Plays a role in cell protection against oxidative stress by detoxifying peroxides and as sensor of hydrogen peroxide-mediated signaling events. Preferentially eliminates organic peroxides rather than hydrogen peroxide. Relays alkyl hydroperoxides as a signal to the transcription factor CAD1/YAP2 by inducing the formation of intramolecular disulfide bonds in CAD1, which causes its nuclear accumulation and activation. Involved in cellular Mn(2+) homeostasis. The protein is Peroxiredoxin AHP1 of Saccharomyces cerevisiae (strain ATCC 204508 / S288c) (Baker's yeast).